Reading from the N-terminus, the 751-residue chain is Leucine-rich repeat-containing protein 56 homolog (751 aa).

The segment at 1–149 (MKKSTVLDAR…IDKSRDNGQL (149 aa)) is disordered. Over residues 13 to 22 (GPLPRRPQQP) the composition is skewed to pro residues. Composition is skewed to polar residues over residues 28–39 (RNSSQVEKNNAR) and 60–87 (HSQS…NLNS). LRR repeat units follow at residues 210–235 (MPQL…NYAN), 236–256 (LRRL…GACA), 258–279 (VLEE…TEVS), 280–304 (STLQ…TLPQ), and 307–328 (KMKH…VELS). Disordered regions lie at residues 430–538 (SRSH…QRQQ), 645–698 (TCTH…EKDW), and 717–751 (EAAL…PVVF). 2 stretches are compositionally biased toward polar residues: residues 456-471 (KNSQ…TNQG) and 662-671 (QQEQPTTAGA). The span at 717–738 (EAALKERVQGSKEVDGGGLEKV) shows a compositional bias: basic and acidic residues. A compositionally biased stretch (acidic residues) spans 739–751 (ESEDEEDVSPVVF).

It belongs to the LRRC56 family.

The protein localises to the cell projection. It localises to the cilium. Its subcellular location is the flagellum. Functionally, required for the assembly of dynein arms in the distal portion of flagellum axoneme. This chain is Leucine-rich repeat-containing protein 56 homolog, found in Trypanosoma brucei brucei (strain 927/4 GUTat10.1).